The sequence spans 199 residues: ATP-dependent Clp protease proteolytic subunit (199 aa).

Residue serine 98 is the Nucleophile of the active site. Histidine 123 is an active-site residue.

This sequence belongs to the peptidase S14 family. Fourteen ClpP subunits assemble into 2 heptameric rings which stack back to back to give a disk-like structure with a central cavity, resembling the structure of eukaryotic proteasomes.

Its subcellular location is the cytoplasm. The catalysed reaction is Hydrolysis of proteins to small peptides in the presence of ATP and magnesium. alpha-casein is the usual test substrate. In the absence of ATP, only oligopeptides shorter than five residues are hydrolyzed (such as succinyl-Leu-Tyr-|-NHMec, and Leu-Tyr-Leu-|-Tyr-Trp, in which cleavage of the -Tyr-|-Leu- and -Tyr-|-Trp bonds also occurs).. Functionally, cleaves peptides in various proteins in a process that requires ATP hydrolysis. Has a chymotrypsin-like activity. Plays a major role in the degradation of misfolded proteins. In Clostridium botulinum (strain Eklund 17B / Type B), this protein is ATP-dependent Clp protease proteolytic subunit.